A 308-amino-acid polypeptide reads, in one-letter code: MSESNKSQASATPCPPDKIVFDEERGEYICTETGEVIEERAIDQGPEWRAFTPEEKEKRSRVGGPLNQTIHDMGISTVIDWKDKDAMGRTLDPKRRLEVLRWRKWQIRARIQSSIDRNLAQAMNELERIGNLLNLPKAVKDEAALIYRKAVEKGLVRGRSIESVVAASIYAACRRMKMARTLDEIAQFTKANRKEVARCYRLILRELDINVPVSDPKDYVTRIGSLLGLSGSTMKMAIDIIEKAKESGLTAGKDPAGLAAAAIYIAALLNDERRTQKEIAQIAGVTEVTVRNRYKELTQELKIQIPNQ.

2 tandem repeats follow at residues 124–207 and 218–299.

This sequence belongs to the TFIIB family.

Stabilizes TBP binding to an archaeal box-A promoter. Also responsible for recruiting RNA polymerase II to the pre-initiation complex (DNA-TBP-TFIIB). This is Transcription initiation factor IIB from Sulfurisphaera tokodaii (strain DSM 16993 / JCM 10545 / NBRC 100140 / 7) (Sulfolobus tokodaii).